Consider the following 170-residue polypeptide: J domain-containing protein (170 aa).

The 66-residue stretch at 17-82 (DYYALLGCDE…SKRALYDKWR (66 aa)) folds into the J domain. Residues 101-170 (QQSMHWSKPN…VLSKFRNYEI (70 aa)) are disordered. Positions 110 to 120 (NTKDRMLEGDG) are enriched in basic and acidic residues. Low complexity predominate over residues 121–134 (SKPSGPSSLGPSNP).

The chain is J domain-containing protein (jdp) from Bombyx mori (Silk moth).